The primary structure comprises 604 residues: Sulfite reductase [NADPH] flavoprotein alpha-component (604 aa).

In terms of domain architecture, Flavodoxin-like spans 66–204 (VTVLSASQTG…SANAWTDNIA (139 aa)). Residues 72–77 (SQTGNA), 119–122 (STQG), and 155–164 (LGDSSYPNFC) each bind FMN. The FAD-binding FR-type domain occupies 239-453 (AAPFPAALLA…VERNDGFRLP (215 aa)). FAD contacts are provided by residues Thr-327, Gln-361, 391–394 (RLYS), 409–411 (TVG), and 424–427 (GGAS). NADP(+) is bound by residues 524-525 (SR), 530-534 (KIYVQ), and Asp-566. Tyr-604 contributes to the FAD binding site.

This sequence belongs to the NADPH-dependent sulphite reductase flavoprotein subunit CysJ family. In the N-terminal section; belongs to the flavodoxin family. The protein in the C-terminal section; belongs to the flavoprotein pyridine nucleotide cytochrome reductase family. As to quaternary structure, alpha(8)-beta(8). The alpha component is a flavoprotein, the beta component is a hemoprotein. FAD is required as a cofactor. Requires FMN as cofactor.

It catalyses the reaction hydrogen sulfide + 3 NADP(+) + 3 H2O = sulfite + 3 NADPH + 4 H(+). It functions in the pathway sulfur metabolism; hydrogen sulfide biosynthesis; hydrogen sulfide from sulfite (NADPH route): step 1/1. Its function is as follows. Component of the sulfite reductase complex that catalyzes the 6-electron reduction of sulfite to sulfide. This is one of several activities required for the biosynthesis of L-cysteine from sulfate. The flavoprotein component catalyzes the electron flow from NADPH -&gt; FAD -&gt; FMN to the hemoprotein component. This is Sulfite reductase [NADPH] flavoprotein alpha-component from Neisseria meningitidis serogroup B (strain ATCC BAA-335 / MC58).